The chain runs to 124 residues: Large ribosomal subunit protein bL12 (124 aa).

Belongs to the bacterial ribosomal protein bL12 family. Homodimer. Part of the ribosomal stalk of the 50S ribosomal subunit. Forms a multimeric L10(L12)X complex, where L10 forms an elongated spine to which 2 to 4 L12 dimers bind in a sequential fashion. Binds GTP-bound translation factors.

In terms of biological role, forms part of the ribosomal stalk which helps the ribosome interact with GTP-bound translation factors. Is thus essential for accurate translation. This Pelodictyon phaeoclathratiforme (strain DSM 5477 / BU-1) protein is Large ribosomal subunit protein bL12.